The primary structure comprises 300 residues: UDP-3-O-acyl-N-acetylglucosamine deacetylase (300 aa).

Positions 78, 237, and 241 each coordinate Zn(2+). The active-site Proton donor is the histidine 264.

This sequence belongs to the LpxC family. Requires Zn(2+) as cofactor.

The enzyme catalyses a UDP-3-O-[(3R)-3-hydroxyacyl]-N-acetyl-alpha-D-glucosamine + H2O = a UDP-3-O-[(3R)-3-hydroxyacyl]-alpha-D-glucosamine + acetate. It participates in glycolipid biosynthesis; lipid IV(A) biosynthesis; lipid IV(A) from (3R)-3-hydroxytetradecanoyl-[acyl-carrier-protein] and UDP-N-acetyl-alpha-D-glucosamine: step 2/6. Its function is as follows. Catalyzes the hydrolysis of UDP-3-O-myristoyl-N-acetylglucosamine to form UDP-3-O-myristoylglucosamine and acetate, the committed step in lipid A biosynthesis. In Acinetobacter baumannii (strain SDF), this protein is UDP-3-O-acyl-N-acetylglucosamine deacetylase.